A 100-amino-acid chain; its full sequence is Large ribosomal subunit protein mL53 (100 aa).

Belongs to the mitochondrion-specific ribosomal protein mL53 family. In terms of assembly, component of the mitochondrial large ribosomal subunit (mt-LSU). Mature yeast 74S mitochondrial ribosomes consist of a small (37S) and a large (54S) subunit. The 37S small subunit contains a 15S ribosomal RNA (15S mt-rRNA) and at least 32 different proteins. The 54S large subunit contains a 21S rRNA (21S mt-rRNA) and at least 45 different proteins.

It is found in the mitochondrion. Its function is as follows. Component of the mitochondrial ribosome (mitoribosome), a dedicated translation machinery responsible for the synthesis of mitochondrial genome-encoded proteins, including at least some of the essential transmembrane subunits of the mitochondrial respiratory chain. The mitoribosomes are attached to the mitochondrial inner membrane and translation products are cotranslationally integrated into the membrane. The chain is Large ribosomal subunit protein mL53 (mrpl44) from Schizosaccharomyces pombe (strain 972 / ATCC 24843) (Fission yeast).